A 170-amino-acid chain; its full sequence is MDLKKYVTIVPDYPKEGVQFKDITTLMDKGDVYRYATDQIVTYAKEKEIDLVVGPEARGFIIGCPVAYALGVGFAPVRKEGKLPREVIKVDYGLEYGKDVLTIHKDAIKPGQRVLITDDLLATGGTIEATIKLVEELGGVVAGIAFLIELTYLEGRNKLDGYDILTLMQY.

This sequence belongs to the purine/pyrimidine phosphoribosyltransferase family. In terms of assembly, homodimer.

Its subcellular location is the cytoplasm. It catalyses the reaction AMP + diphosphate = 5-phospho-alpha-D-ribose 1-diphosphate + adenine. It participates in purine metabolism; AMP biosynthesis via salvage pathway; AMP from adenine: step 1/1. Functionally, catalyzes a salvage reaction resulting in the formation of AMP, that is energically less costly than de novo synthesis. The polypeptide is Adenine phosphoribosyltransferase (Bacillus licheniformis (strain ATCC 14580 / DSM 13 / JCM 2505 / CCUG 7422 / NBRC 12200 / NCIMB 9375 / NCTC 10341 / NRRL NRS-1264 / Gibson 46)).